Here is a 377-residue protein sequence, read N- to C-terminus: Flagellar P-ring protein (377 aa).

Positions M1–A33 are cleaved as a signal peptide.

It belongs to the FlgI family. In terms of assembly, the basal body constitutes a major portion of the flagellar organelle and consists of four rings (L,P,S, and M) mounted on a central rod.

The protein resides in the periplasm. It localises to the bacterial flagellum basal body. Its function is as follows. Assembles around the rod to form the L-ring and probably protects the motor/basal body from shearing forces during rotation. This chain is Flagellar P-ring protein, found in Nitrosospira multiformis (strain ATCC 25196 / NCIMB 11849 / C 71).